Here is a 326-residue protein sequence, read N- to C-terminus: Undecaprenyl-diphosphatase (326 aa).

9 consecutive transmembrane segments (helical) span residues 11 to 31 (AFSL…IAVA), 42 to 62 (TGVI…LGFI), 90 to 110 (GVAF…WYFW), 138 to 158 (LGIG…KLLV), 165 to 185 (FFRS…LLAL), 212 to 232 (ALAL…GLFI), 242 to 262 (FSFL…LKGL), 272 to 292 (ILPL…AIAW), and 304 to 324 (IFVW…GMGF).

It belongs to the UppP family.

Its subcellular location is the cell inner membrane. The enzyme catalyses di-trans,octa-cis-undecaprenyl diphosphate + H2O = di-trans,octa-cis-undecaprenyl phosphate + phosphate + H(+). Functionally, catalyzes the dephosphorylation of undecaprenyl diphosphate (UPP). Confers resistance to bacitracin. The polypeptide is Undecaprenyl-diphosphatase (Synechocystis sp. (strain ATCC 27184 / PCC 6803 / Kazusa)).